The following is a 484-amino-acid chain: Sperm motility kinase Tcr mutant form (484 aa).

The 249-residue stretch at Tyr-8–Val-256 folds into the Protein kinase domain. ATP is bound by residues Ile-14–Val-22 and Lys-37. Asp-127 functions as the Proton acceptor in the catalytic mechanism. Disordered regions lie at residues Glu-355–Gln-400 and Ser-426–Pro-446. Over residues Pro-391–Gln-400 the composition is skewed to polar residues.

This sequence belongs to the protein kinase superfamily. Tyr protein kinase family. Smok subfamily. As to expression, testis-specific. Expressed in the testis from 22 days postpartum (22 dpp). Expressed late in spermiogenesis, only in Tcr-containing t-haplotypes.

The catalysed reaction is L-seryl-[protein] + ATP = O-phospho-L-seryl-[protein] + ADP + H(+). It carries out the reaction L-threonyl-[protein] + ATP = O-phospho-L-threonyl-[protein] + ADP + H(+). Its function is as follows. While the main function of Smoks is to control sperm motility, the role of Smok-Tcr, with reduced kinase activity, is to counterbalance a signaling impairment caused by the distorter/sterility loci, giving t-sperm an advantage in reaching the oocytes. Transmission ratio distortion also called segregation distortion is the name given to the phenomenon above-mentioned. Being associated with the T-complex, it allows males heterozygous for a complete t-haplotype to preferentially transmit the t-haplotype chromosome. In Mus musculus (Mouse), this protein is Sperm motility kinase Tcr mutant form (Smoktcr).